We begin with the raw amino-acid sequence, 300 residues long: Bifunctional protein FolD (300 aa).

NADP(+)-binding positions include 169 to 171, Ser196, and Ile237; that span reads GRG.

This sequence belongs to the tetrahydrofolate dehydrogenase/cyclohydrolase family. Homodimer.

The catalysed reaction is (6R)-5,10-methylene-5,6,7,8-tetrahydrofolate + NADP(+) = (6R)-5,10-methenyltetrahydrofolate + NADPH. It catalyses the reaction (6R)-5,10-methenyltetrahydrofolate + H2O = (6R)-10-formyltetrahydrofolate + H(+). The protein operates within one-carbon metabolism; tetrahydrofolate interconversion. Its function is as follows. Catalyzes the oxidation of 5,10-methylenetetrahydrofolate to 5,10-methenyltetrahydrofolate and then the hydrolysis of 5,10-methenyltetrahydrofolate to 10-formyltetrahydrofolate. This is Bifunctional protein FolD from Clavibacter michiganensis subsp. michiganensis (strain NCPPB 382).